We begin with the raw amino-acid sequence, 281 residues long: Diaminopimelate epimerase (281 aa).

Positions 13 and 66 each coordinate substrate. Cys75 acts as the Proton donor in catalysis. Residues 76 to 77, Asn164, Asn197, and 215 to 216 contribute to the substrate site; these read GN and ER. Cys224 acts as the Proton acceptor in catalysis. 225 to 226 is a binding site for substrate; that stretch reads GT.

Belongs to the diaminopimelate epimerase family. Homodimer.

It localises to the cytoplasm. The enzyme catalyses (2S,6S)-2,6-diaminopimelate = meso-2,6-diaminopimelate. It participates in amino-acid biosynthesis; L-lysine biosynthesis via DAP pathway; DL-2,6-diaminopimelate from LL-2,6-diaminopimelate: step 1/1. Functionally, catalyzes the stereoinversion of LL-2,6-diaminopimelate (L,L-DAP) to meso-diaminopimelate (meso-DAP), a precursor of L-lysine and an essential component of the bacterial peptidoglycan. This Microcystis aeruginosa (strain NIES-843 / IAM M-2473) protein is Diaminopimelate epimerase.